The primary structure comprises 145 residues: uncharacterized protein (145 aa).

Methionine 1 is subject to N-acetylmethionine. A disordered region spans residues 15–41 (QLKNNSGGTNGDRNSGANNGGGENSAP). Polar residues predominate over residues 16–27 (LKNNSGGTNGDR). Phosphoserine occurs at positions 121 and 126. Positions 125 to 145 (NSFDKQNAKNDDDEDDDDFFD) are disordered. Over residues 135 to 145 (DDDEDDDDFFD) the composition is skewed to acidic residues.

The protein belongs to the PDCD5 family.

This is an uncharacterized protein from Saccharomyces cerevisiae (strain ATCC 204508 / S288c) (Baker's yeast).